The primary structure comprises 495 residues: Monoamine oxidase N (495 aa).

Residues 1–19 (MTSRDGYQWTPETGLTQGV) are compositionally biased toward polar residues. A disordered region spans residues 1–23 (MTSRDGYQWTPETGLTQGVPSLG). Positions 493-495 (ARL) match the Microbody targeting signal motif.

Belongs to the flavin monoamine oxidase family. It depends on FAD as a cofactor.

It is found in the peroxisome. It carries out the reaction a secondary aliphatic amine + O2 + H2O = a primary amine + an aldehyde + H2O2. The polypeptide is Monoamine oxidase N (maoN) (Aspergillus niger).